A 350-amino-acid polypeptide reads, in one-letter code: Holliday junction branch migration complex subunit RuvB (350 aa).

Positions 1–183 are large ATPase domain (RuvB-L); the sequence is MSAERLVNPH…FVAVHRLVFY (183 aa). ATP-binding positions include Leu22, Arg23, Gly64, Lys67, Thr68, Ser69, 130–132, Arg173, Tyr183, and Arg220; that span reads EDF. Thr68 contacts Mg(2+). Positions 184–254 are small ATPAse domain (RuvB-S); the sequence is SDDAMTEIVS…VARDALAQLE (71 aa). The tract at residues 257 to 350 is head domain (RuvB-H); it reads ELGLDENDRR…ESGPQQATLF (94 aa). DNA contacts are provided by Arg312 and Arg317. A disordered region spans residues 331-350; the sequence is YPERTLPADDESGPQQATLF.

It belongs to the RuvB family. Homohexamer. Forms an RuvA(8)-RuvB(12)-Holliday junction (HJ) complex. HJ DNA is sandwiched between 2 RuvA tetramers; dsDNA enters through RuvA and exits via RuvB. An RuvB hexamer assembles on each DNA strand where it exits the tetramer. Each RuvB hexamer is contacted by two RuvA subunits (via domain III) on 2 adjacent RuvB subunits; this complex drives branch migration. In the full resolvosome a probable DNA-RuvA(4)-RuvB(12)-RuvC(2) complex forms which resolves the HJ.

It localises to the cytoplasm. The catalysed reaction is ATP + H2O = ADP + phosphate + H(+). In terms of biological role, the RuvA-RuvB-RuvC complex processes Holliday junction (HJ) DNA during genetic recombination and DNA repair, while the RuvA-RuvB complex plays an important role in the rescue of blocked DNA replication forks via replication fork reversal (RFR). RuvA specifically binds to HJ cruciform DNA, conferring on it an open structure. The RuvB hexamer acts as an ATP-dependent pump, pulling dsDNA into and through the RuvAB complex. RuvB forms 2 homohexamers on either side of HJ DNA bound by 1 or 2 RuvA tetramers; 4 subunits per hexamer contact DNA at a time. Coordinated motions by a converter formed by DNA-disengaged RuvB subunits stimulates ATP hydrolysis and nucleotide exchange. Immobilization of the converter enables RuvB to convert the ATP-contained energy into a lever motion, pulling 2 nucleotides of DNA out of the RuvA tetramer per ATP hydrolyzed, thus driving DNA branch migration. The RuvB motors rotate together with the DNA substrate, which together with the progressing nucleotide cycle form the mechanistic basis for DNA recombination by continuous HJ branch migration. Branch migration allows RuvC to scan DNA until it finds its consensus sequence, where it cleaves and resolves cruciform DNA. In Chloroflexus aurantiacus (strain ATCC 29366 / DSM 635 / J-10-fl), this protein is Holliday junction branch migration complex subunit RuvB.